An 834-amino-acid chain; its full sequence is Inner nuclear membrane protein SRC1 (834 aa).

The disordered stretch occupies residues 68 to 292 (DEGIVKMDRP…TANGTGHSTP (225 aa)). Positions 77–86 (PSSSPSIASP) are enriched in low complexity. Ser-78, Ser-80, and Ser-85 each carry phosphoserine. Acidic residues-rich tracts occupy residues 114–127 (VSND…DDDD) and 142–153 (DTDEVDDEEDDV). Residues 154 to 170 (ITSSSNKSDTNDFQQNS) are compositionally biased toward polar residues. Ser-181 is modified (phosphoserine). Residues 188 to 198 (NSKENKIDNKH) show a composition bias toward basic and acidic residues. Residues Ser-203, Ser-204, and Ser-206 each carry the phosphoserine modification. Polar residues predominate over residues 243-266 (IKNTNRKPVSMDNFNDSLTSSGTE). Phosphoserine is present on Ser-301. The segment at 307-364 (PQKEVPSTILVPEVEQQEPSQSERTPSLFSSEGSGSESEAPLLPEITTPGPHQPMGNT) is disordered. Composition is skewed to low complexity over residues 317-329 (VPEV…SQSE) and 336-345 (SSEGSGSESE). Thr-394 bears the Phosphothreonine mark. The residue at position 427 (Ser-427) is a Phosphoserine. Helical transmembrane passes span 455-475 (LLAL…GLWY) and 708-728 (IWLM…LKNY).

The protein resides in the nucleus inner membrane. Its function is as follows. Plays a role in sister chromatid separation. The protein is Inner nuclear membrane protein SRC1 (SRC1) of Saccharomyces cerevisiae (strain ATCC 204508 / S288c) (Baker's yeast).